A 160-amino-acid polypeptide reads, in one-letter code: MKRFFLVAIASVLFFFNTMVGSANAVELTESTRTIPLDEAGGTTTLTARQFTNGQKIFVDTCTQCHLQGKTKTNNNVSLGLADLAGAEPRRDNVLALVEFLKNPKSYDGEDDYSELHPNISRPDIYPEMRNYTEDDIFDVAGYTLIAPKLDERWGGTIYF.

Positions 1–25 are cleaved as a signal peptide; it reads MKRFFLVAIASVLFFFNTMVGSANA. Cys62, Cys65, His66, and His117 together coordinate heme c.

It belongs to the cytochrome c family. PsbV subfamily. PSII is composed of 1 copy each of membrane proteins PsbA, PsbB, PsbC, PsbD, PsbE, PsbF, PsbH, PsbI, PsbJ, PsbK, PsbL, PsbM, PsbT, PsbX, PsbY, PsbZ, Psb30/Ycf12, peripheral proteins PsbO, CyanoQ (PsbQ), PsbU, PsbV and a large number of cofactors. It forms dimeric complexes. The cyanobacterial oxygen-evolving complex is composed of PsbO, CyanoQ (PsbQ), PsbV and PsbU. It depends on heme c as a cofactor.

It localises to the cellular thylakoid membrane. Functionally, one of the extrinsic, lumenal subunits of photosystem II (PSII). PSII is a light-driven water plastoquinone oxidoreductase, using light energy to abstract electrons from H(2)O, generating a proton gradient subsequently used for ATP formation. The extrinsic proteins stabilize the structure of photosystem II oxygen-evolving complex (OEC), the ion environment of oxygen evolution and protect the OEC against heat-induced inactivation. Low-potential cytochrome c that plays a role in the OEC of PSII, required for normal function or stabilization of PSII. The chain is Photosystem II extrinsic protein V from Synechocystis sp. (strain ATCC 27184 / PCC 6803 / Kazusa).